The primary structure comprises 159 residues: Small ribosomal subunit protein uS4 (159 aa).

Positions 106-158 (RRLQTIVYRKGLAKSIYHARQLVVHGHVAVAGRRVTSPGFLVPRDLEDKITLI) constitute an S4 RNA-binding domain.

It belongs to the universal ribosomal protein uS4 family. As to quaternary structure, part of the 30S ribosomal subunit. Contacts protein S5. The interaction surface between S4 and S5 is involved in control of translational fidelity.

One of the primary rRNA binding proteins, it binds directly to 16S rRNA where it nucleates assembly of the body of the 30S subunit. In terms of biological role, with S5 and S12 plays an important role in translational accuracy. In Pyrobaculum islandicum (strain DSM 4184 / JCM 9189 / GEO3), this protein is Small ribosomal subunit protein uS4.